We begin with the raw amino-acid sequence, 135 residues long: Probable 5-hydroxyisourate hydrolase R09H10.3 (135 aa).

Positions 1-20 (MNKFSLFFALTATLMTITES) are cleaved as a signal peptide. 3 residues coordinate substrate: His30, Arg68, and Tyr132.

Belongs to the transthyretin family. 5-hydroxyisourate hydrolase subfamily. In terms of assembly, homotetramer.

It catalyses the reaction 5-hydroxyisourate + H2O = 5-hydroxy-2-oxo-4-ureido-2,5-dihydro-1H-imidazole-5-carboxylate + H(+). Functionally, catalyzes the hydrolysis of 5-hydroxyisourate (HIU) to 2-oxo-4-hydroxy-4-carboxy-5-ureidoimidazoline (OHCU). In Caenorhabditis elegans, this protein is Probable 5-hydroxyisourate hydrolase R09H10.3.